We begin with the raw amino-acid sequence, 329 residues long: Delta-aminolevulinic acid dehydratase (329 aa).

The Schiff-base intermediate with substrate role is filled by K202. 2 residues coordinate 5-aminolevulinate: R212 and R223. E239 provides a ligand contact to Mg(2+). K254 serves as the catalytic Schiff-base intermediate with substrate. The 5-aminolevulinate site is built by S280 and Y319.

Belongs to the ALAD family. In terms of assembly, homooctamer.

It carries out the reaction 2 5-aminolevulinate = porphobilinogen + 2 H2O + H(+). It participates in porphyrin-containing compound metabolism; protoporphyrin-IX biosynthesis; coproporphyrinogen-III from 5-aminolevulinate: step 1/4. Functionally, catalyzes an early step in the biosynthesis of tetrapyrroles. Binds two molecules of 5-aminolevulinate per subunit, each at a distinct site, and catalyzes their condensation to form porphobilinogen. The polypeptide is Delta-aminolevulinic acid dehydratase (hemB) (Mycobacterium tuberculosis (strain CDC 1551 / Oshkosh)).